The chain runs to 499 residues: ALBINO3-like protein 1, chloroplastic (499 aa).

A chloroplast-targeting transit peptide spans 1–45 (MSSTISLKPTHLILSSFSTGKVLQFRRSRFSHTPSSSSSRYRTLV). 4 helical membrane passes run 115–135 (LSTV…TVLV), 184–204 (LAGI…PVWI), 263–283 (LAYL…IQIM), and 302–322 (LLPL…SLYW). A disordered region spans residues 378 to 499 (LKIPREKGGE…QQHSHETEKR (122 aa)). Basic and acidic residues-rich tracts occupy residues 379–420 (KIPR…RQKA), 430–452 (DKAH…KKTE), and 486–499 (HDTE…TEKR). A coiled-coil region spans residues 397-436 (GERFRLLKEQEAKRRREKEERQKAEAALSNQNTDKAHEQD).

The protein belongs to the OXA1/ALB3/YidC (TC 2.A.9.2) family. As to quaternary structure, homodimer. Interacts with ALB3. Interacts with STIC2. In terms of tissue distribution, highly expressed in green tissues.

Its subcellular location is the plastid. It is found in the chloroplast thylakoid membrane. In terms of biological role, required for the insertion of some light harvesting chlorophyll-binding proteins (LHCP) into the chloroplast thylakoid membrane. Plays a role in the accumulation of some cytochrome b6f components in the thylakoid membrane. Required for the assembly and/or stability of the F(1)F(0) ATP synthase in chloroplast thylakoid membranes. Functions to stabilize or promote assembly of F(1) during its attachment to the membrane-embedded F(0) part. Participates with STIC2 in thylakoid protein targeting. May function with a specific subset of thylakoidal proteins. The chain is ALBINO3-like protein 1, chloroplastic from Arabidopsis thaliana (Mouse-ear cress).